A 528-amino-acid chain; its full sequence is Calcium-dependent protein kinase 4 (528 aa).

The span at 1–16 (MGQEMSTQSDMQNENQ) shows a compositional bias: polar residues. The disordered stretch occupies residues 1–36 (MGQEMSTQSDMQNENQKGNKRNLKGSQGKNGLKERS). Glycine 2 is lipidated: N-myristoyl glycine. One can recognise a Protein kinase domain in the interval 70–328 (YKGIKILGKG…ARDALEHEWI (259 aa)). ATP-binding positions include 76 to 84 (LGKGSFGEV) and lysine 99. Aspartate 193 (proton acceptor) is an active-site residue. Positions 350–358 (NIKQFQSTQ) match the J domain autoinhibitory motif motif. The segment at 350 to 386 (NIKQFQSTQKLAQAALLYMGSKLTTIDETKELTKIFK) is j domain. Positions 359-368 (KLAQAALLYM) match the J domain EF-hand interaction motif motif. 4 EF-hand domains span residues 376–411 (DETK…LLKL), 423–458 (AIEV…RKLL), 459–494 (LSTE…GDVS), and 498–528 (WKTV…LCNY). Ca(2+) is bound by residues aspartate 389, asparagine 391, aspartate 393, glutamine 395, glutamate 400, aspartate 436, aspartate 438, asparagine 440, tyrosine 442, glutamate 447, aspartate 472, aspartate 474, serine 476, lysine 478, glutamate 483, aspartate 506, asparagine 508, aspartate 510, glutamate 512, and glutamate 517.

This sequence belongs to the protein kinase superfamily. Ser/Thr protein kinase family. CDPK subfamily. In terms of assembly, may interact with the pre-replication MCM complex prior male gametogenesis activation. Mg(2+) serves as cofactor. Post-translationally, myristoylated; myristoylation may target it to different subcellular compartments. During male gametogenesis, myristoylation is required to initiate DNA replication but not for mitotic spindle assembly or axoneme activation. In terms of processing, not palmitoylated. May be autophosphorylated on Thr-234 in vitro.

It is found in the cytoplasm. It localises to the membrane. The protein localises to the chromosome. It carries out the reaction L-seryl-[protein] + ATP = O-phospho-L-seryl-[protein] + ADP + H(+). The enzyme catalyses L-threonyl-[protein] + ATP = O-phospho-L-threonyl-[protein] + ADP + H(+). Its activity is regulated as follows. Activated by calcium. Upon calcium binding to the EF-hand domains, the C-terminus of the junction domain (J domain) undergoes a conformational change which results in the dissociation of the pseudo-substrate inhibitory motif from the catalytic domain. This, in turn, may facilitate the autophosphorylation of the activation loop at Thr-234, which leads to the kinase activation. Intracellular calcium increase is triggered by xanthurenic acid (XA), a small mosquito molecule that induces the differentiation of specialized transmission stages, the gametocytes, into male and female gametes. Activated by a decrease in temperature (20 degrees Celsius) and an increase in pH (7.6) occurring when the parasite is ingested by in the mosquito. Its function is as follows. Calcium-dependent protein kinase which acts as a sensor and effector of intracellular Ca(2+) levels probably in part downstream of cGMP-activated PKG kinase. Plays a central role in the host erythrocytes and hepatocytes infection cycles, sexual reproduction and mosquito transmission of the parasite. During the liver stage, involved in sporozoite motility and thus in sporozoite invasion of host hepatocytes, probably together with CDPK1 and CDPK5. Involved in merosome egress from host hepatocytes, probably together with CDPK5. During the asexual blood stage, involved in merozoite invasion of host erythrocytes and motility by stabilizing the inner membrane complex, a structure below the plasma membrane which acts as an anchor for the glidosome, an acto-myosin motor. Required for cell cycle progression in the male gametocyte. During male gametogenesis in the mosquito gut, required to initiate the first round of DNA replication, probably by facilitating the assembly of the pre-replicative MCM complex, to assemble the first mitotic spindle and, at the end of gametogenesis, to initiate axoneme motility, cytokinesis and subsequent exflagellation. For each of these steps, may phosphorylate SOC1, SOC2 and SOC3, respectively. Together with CDPK1, regulates ookinete gliding in the mosquito host midgut. In terms of biological role, during male gametogenesis in the mosquito gut, required to initiate the first round of DNA replication, probably by facilitating the assembly of the pre-replicative MCM complex, and to assemble the first mitotic spindle. At the end of male gametogenesis in the mosquito gut, required to initiate axoneme motility, cytokinesis and subsequent exflagellation. This Plasmodium berghei (strain Anka) protein is Calcium-dependent protein kinase 4.